Reading from the N-terminus, the 688-residue chain is Potassium-transporting ATPase ATP-binding subunit (688 aa).

The next 4 membrane-spanning stretches (helical) occupy residues 34 to 54 (PVMF…LAIL), 62 to 82 (ALFT…ANFA), 219 to 239 (VALT…TATL), and 260 to 280 (VLVA…LSAI). The 4-aspartylphosphate intermediate role is filled by Asp313. ATP is bound by residues Asp350, Glu354, 383–390 (FSAQTRMS), and Lys401. 2 residues coordinate Mg(2+): Asp524 and Asp528. The next 3 helical transmembrane spans lie at 594–614 (FAII…LNVM), 622–642 (AILS…PLAL), and 667–687 (GLLV…ALIM).

Belongs to the cation transport ATPase (P-type) (TC 3.A.3) family. Type IA subfamily. As to quaternary structure, the system is composed of three essential subunits: KdpA, KdpB and KdpC.

The protein resides in the cell inner membrane. The enzyme catalyses K(+)(out) + ATP + H2O = K(+)(in) + ADP + phosphate + H(+). Part of the high-affinity ATP-driven potassium transport (or Kdp) system, which catalyzes the hydrolysis of ATP coupled with the electrogenic transport of potassium into the cytoplasm. This subunit is responsible for energy coupling to the transport system and for the release of the potassium ions to the cytoplasm. The chain is Potassium-transporting ATPase ATP-binding subunit from Yersinia enterocolitica serotype O:8 / biotype 1B (strain NCTC 13174 / 8081).